Consider the following 336-residue polypeptide: E3 ubiquitin-protein ligase RING2 (336 aa).

The interval 2–179 (TQTVQTNGVQ…AEDNGDSSHC (178 aa)) is interaction with HIP2. The segment at 51–91 (CPICLDMLKNTMTTKECLHRFCADCIITALRSGNKECPTCR) adopts an RING-type zinc-finger fold. The tract at residues 93–98 (KLVSKR) is interaction with nucleosomes via an acidic patch on histone H2A and histone H2B. Residues 158 to 218 (RGKKHQIENG…NATENGGGDI (61 aa)) are disordered. Polar residues predominate over residues 176–190 (SSHCSNASVHSNQEA).

In terms of assembly, component of chromatin-associated Polycomb (PcG) complexes. Component of a PRC1-like complex. Component of some MLL1/MLL complex.

It is found in the nucleus. Its subcellular location is the cytoplasm. The protein resides in the chromosome. The enzyme catalyses S-ubiquitinyl-[E2 ubiquitin-conjugating enzyme]-L-cysteine + [acceptor protein]-L-lysine = [E2 ubiquitin-conjugating enzyme]-L-cysteine + N(6)-ubiquitinyl-[acceptor protein]-L-lysine.. It functions in the pathway protein modification; protein ubiquitination. In terms of biological role, E3 ubiquitin-protein ligase that mediates monoubiquitination of 'Lys-119' of histone H2A (H2AK119Ub), thereby playing a central role in histone code and gene regulation. H2AK119Ub gives a specific tag for epigenetic transcriptional repression. Essential component of a Polycomb group (PcG) multiprotein PRC1-like complex, a complex class required to maintain the transcriptionally repressive state of many genes, including Hox genes, throughout development. PcG PRC1 complex acts via chromatin remodeling and modification of histones, rendering chromatin heritably changed in its expressibility. This chain is E3 ubiquitin-protein ligase RING2 (rnf2), found in Danio rerio (Zebrafish).